The sequence spans 446 residues: Methylenetetrahydrofolate--tRNA-(uracil-5-)-methyltransferase TrmFO (446 aa).

8 to 13 (GGGLAG) contacts FAD.

This sequence belongs to the MnmG family. TrmFO subfamily. The cofactor is FAD.

It localises to the cytoplasm. It catalyses the reaction uridine(54) in tRNA + (6R)-5,10-methylene-5,6,7,8-tetrahydrofolate + NADH + H(+) = 5-methyluridine(54) in tRNA + (6S)-5,6,7,8-tetrahydrofolate + NAD(+). It carries out the reaction uridine(54) in tRNA + (6R)-5,10-methylene-5,6,7,8-tetrahydrofolate + NADPH + H(+) = 5-methyluridine(54) in tRNA + (6S)-5,6,7,8-tetrahydrofolate + NADP(+). Functionally, catalyzes the folate-dependent formation of 5-methyl-uridine at position 54 (M-5-U54) in all tRNAs. The chain is Methylenetetrahydrofolate--tRNA-(uracil-5-)-methyltransferase TrmFO from Zymomonas mobilis subsp. mobilis (strain ATCC 31821 / ZM4 / CP4).